A 319-amino-acid polypeptide reads, in one-letter code: ATP-dependent 6-phosphofructokinase (319 aa).

Glycine 11 contacts ATP. Residue 21–25 participates in ADP binding; that stretch reads RAVVR. Residues 72–73 and 102–105 contribute to the ATP site; these read RC and GDGS. Aspartate 103 contacts Mg(2+). 125 to 127 lines the substrate pocket; sequence TID. The active-site Proton acceptor is aspartate 127. Arginine 154 is an ADP binding site. Substrate is bound by residues arginine 162 and 169–171; that span reads MGR. Residues 185 to 187, arginine 211, and 213 to 215 contribute to the ADP site; these read GAE and KKH. Substrate is bound by residues glutamate 222, arginine 243, and 249–252; that span reads HVQR.

Belongs to the phosphofructokinase type A (PFKA) family. ATP-dependent PFK group I subfamily. Prokaryotic clade 'B1' sub-subfamily. As to quaternary structure, homotetramer. It depends on Mg(2+) as a cofactor.

The protein localises to the cytoplasm. The enzyme catalyses beta-D-fructose 6-phosphate + ATP = beta-D-fructose 1,6-bisphosphate + ADP + H(+). The protein operates within carbohydrate degradation; glycolysis; D-glyceraldehyde 3-phosphate and glycerone phosphate from D-glucose: step 3/4. Allosterically activated by ADP and other diphosphonucleosides, and allosterically inhibited by phosphoenolpyruvate. Catalyzes the phosphorylation of D-fructose 6-phosphate to fructose 1,6-bisphosphate by ATP, the first committing step of glycolysis. This Bacillus cytotoxicus (strain DSM 22905 / CIP 110041 / 391-98 / NVH 391-98) protein is ATP-dependent 6-phosphofructokinase.